The following is a 142-amino-acid chain: ATP synthase epsilon chain (142 aa).

Belongs to the ATPase epsilon chain family. In terms of assembly, F-type ATPases have 2 components, CF(1) - the catalytic core - and CF(0) - the membrane proton channel. CF(1) has five subunits: alpha(3), beta(3), gamma(1), delta(1), epsilon(1). CF(0) has three main subunits: a, b and c.

The protein resides in the cell inner membrane. Its function is as follows. Produces ATP from ADP in the presence of a proton gradient across the membrane. The chain is ATP synthase epsilon chain from Shewanella halifaxensis (strain HAW-EB4).